Reading from the N-terminus, the 155-residue chain is Ribosomal RNA large subunit methyltransferase H (155 aa).

Residues leucine 72, glycine 103, and 122 to 127 contribute to the S-adenosyl-L-methionine site; that span reads LSPLTL.

This sequence belongs to the RNA methyltransferase RlmH family. Homodimer.

Its subcellular location is the cytoplasm. The catalysed reaction is pseudouridine(1915) in 23S rRNA + S-adenosyl-L-methionine = N(3)-methylpseudouridine(1915) in 23S rRNA + S-adenosyl-L-homocysteine + H(+). Functionally, specifically methylates the pseudouridine at position 1915 (m3Psi1915) in 23S rRNA. The chain is Ribosomal RNA large subunit methyltransferase H from Actinobacillus pleuropneumoniae serotype 5b (strain L20).